Consider the following 275-residue polypeptide: Rhamnulose-1-phosphate aldolase (275 aa).

Residue glutamate 117 is part of the active site. Zn(2+) contacts are provided by histidine 141, histidine 143, and histidine 212.

This sequence belongs to the aldolase class II family. RhaD subfamily. Homotetramer. It depends on Zn(2+) as a cofactor.

The protein resides in the cytoplasm. The enzyme catalyses L-rhamnulose 1-phosphate = (S)-lactaldehyde + dihydroxyacetone phosphate. The protein operates within carbohydrate degradation; L-rhamnose degradation; glycerone phosphate from L-rhamnose: step 3/3. In terms of biological role, catalyzes the reversible cleavage of L-rhamnulose-1-phosphate to dihydroxyacetone phosphate (DHAP) and L-lactaldehyde. This Salmonella paratyphi B (strain ATCC BAA-1250 / SPB7) protein is Rhamnulose-1-phosphate aldolase.